Consider the following 569-residue polypeptide: Toxin YxiD (569 aa).

One can recognise an LXG domain in the interval 1-235 (MKTLDVHALH…NPQMKQADDS (235 aa)). A coiled-coil region spans residues 8–91 (ALHEGIQHTI…QHAISSVESN (84 aa)). The disordered stretch occupies residues 548-569 (HQAGIHGTGSPANELFKGGKKK).

In the N-terminal section; belongs to the LXG family. In terms of assembly, probably interacts with cognate immunity protein YxxD but not with non-cognate immunity proteins. The interaction inhibits the toxic activity of YxxD.

The protein localises to the secreted. Functionally, toxic component of one of 6 LXG toxin-immunity modules in this strain. They promote kin selection, mediate competition in biofilms, and drive spatial segregation of different strains, indicating that LXG toxins may help avoid warfare between strains in biofilms. Mediates intercellular competition during biofilm formation; disruption of the operon disadvantages the bacteria, but overexpression of the cognate immunity protein restores growth in competition with wild-type. Overexpression alone in situ causes growth arrest but not cell lysis, a large decrease in chromosomal DNA content and the production of anucleate cells. No effect is seen on rRNA. Co-overexpression with cognate immunity protein YxxD does not cause growth arrest. The toxic effect is not dependent on the epsA and tapA operons which are required for biofilm formation. The sequence is that of Toxin YxiD (yxiD) from Bacillus subtilis (strain 168).